Here is a 223-residue protein sequence, read N- to C-terminus: Uracil-DNA glycosylase (223 aa).

Catalysis depends on Asp61, which acts as the Proton acceptor.

Belongs to the uracil-DNA glycosylase (UDG) superfamily. UNG family.

It is found in the cytoplasm. It carries out the reaction Hydrolyzes single-stranded DNA or mismatched double-stranded DNA and polynucleotides, releasing free uracil.. Its function is as follows. Excises uracil residues from the DNA which can arise as a result of misincorporation of dUMP residues by DNA polymerase or due to deamination of cytosine. This is Uracil-DNA glycosylase from Histophilus somni (strain 129Pt) (Haemophilus somnus).